The primary structure comprises 279 residues: Phosphate-binding protein PstS (279 aa).

Residues 1-18 form the signal peptide; it reads MKKVIILIFMLSTSLLYN. The N-palmitoyl cysteine moiety is linked to residue C19. A lipid anchor (S-diacylglycerol cysteine) is attached at C19. Phosphate-binding positions include 33–35, S63, and 151–153; these read STT and SGS.

It belongs to the PstS family. As to quaternary structure, monomer (in vitro). The complex is composed of two ATP-binding proteins (PstB), two transmembrane proteins (PstC and PstA) and a solute-binding protein (PstS).

Its subcellular location is the cell membrane. Functionally, binds inorganic phosphate with a Kd of 1.2 uM. Part of the ABC transporter complex PstSACB involved in phosphate import. In Borreliella burgdorferi (strain ATCC 35210 / DSM 4680 / CIP 102532 / B31) (Borrelia burgdorferi), this protein is Phosphate-binding protein PstS.